Here is a 325-residue protein sequence, read N- to C-terminus: Glutarate 2-hydroxylase (325 aa).

Fe cation contacts are provided by His-160, Asp-162, and His-292.

The protein belongs to the glutarate hydroxylase family. As to quaternary structure, homotetramer. The cofactor is Fe(2+).

The enzyme catalyses glutarate + 2-oxoglutarate + O2 = (S)-2-hydroxyglutarate + succinate + CO2. The protein operates within amino-acid degradation. Functionally, acts as an alpha-ketoglutarate-dependent dioxygenase catalyzing hydroxylation of glutarate (GA) to L-2-hydroxyglutarate (L2HG). Functions in a L-lysine degradation pathway that proceeds via cadaverine, glutarate and L-2-hydroxyglutarate. This is Glutarate 2-hydroxylase from Pseudomonas putida (strain ATCC 700007 / DSM 6899 / JCM 31910 / BCRC 17059 / LMG 24140 / F1).